The chain runs to 268 residues: Chymotrypsin-C (268 aa).

The signal sequence occupies residues 1–16; it reads MLGITVLAAILACASC. Positions 17 to 29 are cleaved as a propeptide — activation peptide; that stretch reads CGNPAFPPNLSTR. Disulfide bonds link C17–C141, C59–C75, C155–C222, C186–C202, and C212–C243. Residue N25 is glycosylated (N-linked (GlcNAc...) asparagine). Residues 30 to 267 form the Peptidase S1 domain; that stretch reads VVGGEDAVPN…YNDWINEKIQ (238 aa). Catalysis depends on H74, which acts as the Charge relay system. N90 is a glycosylation site (N-linked (GlcNAc...) asparagine). D121 acts as the Charge relay system in catalysis. S216 functions as the Charge relay system in the catalytic mechanism.

It belongs to the peptidase S1 family. Elastase subfamily. Pancreas.

The enzyme catalyses Preferential cleavage: Leu-|-Xaa, Tyr-|-Xaa, Phe-|-Xaa, Met-|-Xaa, Trp-|-Xaa, Gln-|-Xaa, Asn-|-Xaa.. Its function is as follows. Regulates activation and degradation of trypsinogens and procarboxypeptidases by targeting specific cleavage sites within their zymogen precursors. Has chymotrypsin-type protease activity and hypocalcemic activity. Cleaves TRY4 and TRY5 and thereby inhibits their autoactivation. The chain is Chymotrypsin-C (Ctrc) from Rattus norvegicus (Rat).